A 202-amino-acid polypeptide reads, in one-letter code: GTP cyclohydrolase 1 (202 aa).

The Zn(2+) site is built by C93, H96, and C164.

It belongs to the GTP cyclohydrolase I family. In terms of assembly, toroid-shaped homodecamer, composed of two pentamers of five dimers.

It carries out the reaction GTP + H2O = 7,8-dihydroneopterin 3'-triphosphate + formate + H(+). The protein operates within cofactor biosynthesis; 7,8-dihydroneopterin triphosphate biosynthesis; 7,8-dihydroneopterin triphosphate from GTP: step 1/1. In Pelagibacter ubique (strain HTCC1062), this protein is GTP cyclohydrolase 1.